The sequence spans 107 residues: Iron-binding protein IscA (107 aa).

Positions 35, 99, and 101 each coordinate Fe cation.

The protein belongs to the HesB/IscA family. Homodimer; may form tetramers and higher multimers. Requires Fe cation as cofactor.

Is able to transfer iron-sulfur clusters to apo-ferredoxin. Multiple cycles of [2Fe2S] cluster formation and transfer are observed, suggesting that IscA acts catalytically. Recruits intracellular free iron so as to provide iron for the assembly of transient iron-sulfur cluster in IscU in the presence of IscS, L-cysteine and the thioredoxin reductase system TrxA/TrxB. This chain is Iron-binding protein IscA, found in Klebsiella pneumoniae subsp. pneumoniae (strain ATCC 700721 / MGH 78578).